Reading from the N-terminus, the 402-residue chain is Multidrug resistance protein MdtH (402 aa).

The Cytoplasmic portion of the chain corresponds to 1-12 (MSRVSQARNLGK). Residues 13–33 (YFLLIDNMLVVLGFFVVFPLI) form a helical membrane-spanning segment. The Periplasmic portion of the chain corresponds to 34 to 98 (SIRFVDQMGW…GFATMGIAHE (65 aa)). A helical membrane pass occupies residues 99-116 (PWLLWFSCLLSGLGGTLF). Over 117–138 (DPPRSALVVKLIRPQQRCRFFS) the chain is Cytoplasmic. The chain crosses the membrane as a helical span at residues 139 to 159 (LLMMQDSAGAVIGALLGSWLL). The Periplasmic portion of the chain corresponds to 160–164 (QYDFR). Residues 165–185 (LVCATGAVLFVLCAAFNAWLL) traverse the membrane as a helical segment. Residues 186-213 (PAWKLSTVRTPVREGMTRVMRDKRFVTY) are Cytoplasmic-facing. Residues 214–234 (VLTLAGYYMLAVQVMLMLPIM) traverse the membrane as a helical segment. The Periplasmic segment spans residues 235 to 243 (VNDVAGAPS). A helical membrane pass occupies residues 244 to 264 (AVKWMYAIEACLSLTLLYPIA). The Cytoplasmic portion of the chain corresponds to 265 to 276 (RWSEKHFRLEHR). A helical transmembrane segment spans residues 277-297 (LMAGLLIMSLSMMPVGMVSGL). The Periplasmic segment spans residues 298 to 299 (QQ). The chain crosses the membrane as a helical span at residues 300-320 (LFTLICLFYIGSIIAEPARET). Residues 321–339 (LSALLADARARGSYMGFSR) are Cytoplasmic-facing. Residues 340–360 (LGLAIGGAIGYIGGGWLFDLG) traverse the membrane as a helical segment. At 361 to 367 (KSAHQPE) the chain is on the periplasmic side. A helical membrane pass occupies residues 368–388 (LPWMMLGIIGIFTFLALGWQF). Over 389-402 (SQKRATRRLLERDA) the chain is Cytoplasmic.

It belongs to the major facilitator superfamily. DHA1 family. MdtH (TC 2.A.1.2.21) subfamily.

The protein resides in the cell inner membrane. This Shigella sonnei (strain Ss046) protein is Multidrug resistance protein MdtH.